Here is a 938-residue protein sequence, read N- to C-terminus: MSDYKSTLNLPETGFPMRGDLAKREPGMLARWTDDDLYGIIRAAKKGKKTFILHDGPPYANGSIHIGHSVNKILKDIIIKSKGLSGYDSPYVPGWDCHGLPIELKVEQEYGKPGEKFTAAEFRAKCREYAATQVDGQRKDFIRLGVLGDWSHPYLTMDFKTEANIIRALGKIIGNGHLHKGAKPVHWCVDCRSALAEAEVEYYDKTSPSIDVAFQAVDQDALKTKFGVSNVNGPISLVIWTTTPWTLPANRAISIAPDFDYALVQIDGQAVILAKDLVESVMQRIGVSDYTILGTVKGAELELLRFTHPFMDFDVPAILGDHVTLDAGTGAVHTAPGHGPDDYVIGQKYGLETANPVGPDGTYLPGTYPTLDGVNVFKANDIVIALLQEKGALLHVEKMQHSYPCCWRHKTPIIFRATPQWFVSMDQKGLRAQSLKEIKGVQWIPDWGQARIESMVANRPDWCISRQRTWGVPMSLFVHKDTEELHPRTLELMEEVAKRVEVDGIQAWWDLDAKEILGDEADQYVKVPDTLDVWFDSGSTHSSVVDVRPEFAGHAADMYLEGSDQHRGWFMSSLMISTAMKGKAPYRQVLTHGFTVDGQGRKMSKSIGNTVSPQDVMNKLGADILRLWVASTDYTGEMAVSDEILKRAADSYRRIRNTARFLLANLNGFDPAKDMVKPEEMVVLDRWAVGCAKAAQEDILKAYEAYDFHEVVQRLMRFCSVEMGSFYLDIIKDRQYTAKADSVARRSCQTALYHIAEALVRWMAPILSFTADEVWGYLPGEREKYVFTGEWYEGLFGLADSEAMNDAFWDELLKVRGEVNKVIEQARADKKVGGSLEAAVTLYAEPVLAAKLTALGDELRFVLLTSGATVADYNDAPADAQQSEVLKGLKVALSKAEGEKCPRCWHYTQDVGKVAEHAEICGRCVSNVAGDGEKRKFA.

Positions 58–68 match the 'HIGH' region motif; that stretch reads PYANGSIHIGH. K183 is subject to N6-acetyllysine. E561 contributes to the L-isoleucyl-5'-AMP binding site. The 'KMSKS' region motif lies at 602-606; sequence KMSKS. Residue K605 coordinates ATP. Zn(2+) is bound by residues C901, C904, C921, and C924.

Belongs to the class-I aminoacyl-tRNA synthetase family. IleS type 1 subfamily. In terms of assembly, monomer. Requires Zn(2+) as cofactor.

Its subcellular location is the cytoplasm. The catalysed reaction is tRNA(Ile) + L-isoleucine + ATP = L-isoleucyl-tRNA(Ile) + AMP + diphosphate. Its function is as follows. Catalyzes the attachment of isoleucine to tRNA(Ile). As IleRS can inadvertently accommodate and process structurally similar amino acids such as valine, to avoid such errors it has two additional distinct tRNA(Ile)-dependent editing activities. One activity is designated as 'pretransfer' editing and involves the hydrolysis of activated Val-AMP. The other activity is designated 'posttransfer' editing and involves deacylation of mischarged Val-tRNA(Ile). This chain is Isoleucine--tRNA ligase, found in Escherichia coli O127:H6 (strain E2348/69 / EPEC).